Reading from the N-terminus, the 1200-residue chain is ATP-dependent helicase/deoxyribonuclease subunit B (1200 aa).

This sequence belongs to the helicase family. AddB/RexB type 2 subfamily. As to quaternary structure, heterodimer of AddA and RexB. It depends on Mg(2+) as a cofactor.

The heterodimer acts as both an ATP-dependent DNA helicase and an ATP-dependent, dual-direction single-stranded exonuclease. Recognizes the chi site generating a DNA molecule suitable for the initiation of homologous recombination. This subunit has 5' -&gt; 3' nuclease activity but not helicase activity. The sequence is that of ATP-dependent helicase/deoxyribonuclease subunit B from Lactiplantibacillus plantarum (strain ATCC BAA-793 / NCIMB 8826 / WCFS1) (Lactobacillus plantarum).